The chain runs to 625 residues: Chaperone protein HtpG (625 aa).

The tract at residues 1–341 (MERKEFKAES…SEDLSLNISR (341 aa)) is a; substrate-binding. Residues 342 to 551 (EMLQHDRQLK…EGEVSIEMEK (210 aa)) form a b region. The interval 552–625 (VLRAMPDNQN…FSNDICKVMA (74 aa)) is c.

It belongs to the heat shock protein 90 family. Homodimer.

It localises to the cytoplasm. Its function is as follows. Molecular chaperone. Has ATPase activity. The chain is Chaperone protein HtpG from Halalkalibacterium halodurans (strain ATCC BAA-125 / DSM 18197 / FERM 7344 / JCM 9153 / C-125) (Bacillus halodurans).